We begin with the raw amino-acid sequence, 67 residues long: MASKIFFVLAVFLVMSAVLPESFAGCKKLNSYCTRQHRECCHGLVCRRPDYGIGRGILWKCTRARKG.

Positions 1 to 24 are cleaved as a signal peptide; it reads MASKIFFVLAVFLVMSAVLPESFA. Intrachain disulfides connect Cys-26–Cys-41, Cys-33–Cys-46, and Cys-40–Cys-61. Residue Lys-66 is modified to Lysine amide.

It is found in the secreted. It localises to the nematocyst. Functionally, alpha-toxins act on postsynaptic membranes, they bind to the nicotinic acetylcholine receptors (nAChR) and thus inhibit them. This toxin shows inhibition against mouse alpha-1-beta-1-delta-epsilon (CHRNA1-CHRNB1-CHRND-CHRNE) (IC(50)=1215 nM), rat alpha-3-beta-4/CHRNA3-CHRNB4 (IC(50)=5.173 uM), rat alpha-7/CHRNA7 (IC(50)=4.786 uM), human alpha-7/CHRNA7 (IC(50)=8.869 uM), and rat alpha-9-alpha-10/CHRNA9-CHRNA10 (IC(50)=202 nM). Also competes with alpha-bungarotoxin for binding to orthosteric sites on muscle-type T.carlifornicus (IC(50)=256 nM) and human alpha-7/CHRNA7 nAChRs (IC(50)=19.81 uM). This is Alpha-actitoxin-Ms11a-3 from Metridium senile (Brown sea anemone).